A 583-amino-acid polypeptide reads, in one-letter code: Protein NRT1/ PTR FAMILY 5.1 (583 aa).

Residues 74 to 94 traverse the membrane as a helical segment; it reads WSGAVWITPIAGAYIADSYIG. Threonine 98 bears the Phosphothreonine mark. Helical transmembrane passes span 99–119, 134–154, 182–202, 210–230, 320–340, 361–381, 405–425, 446–466, 485–505, and 529–549; these read FTASSLIYVLGMILLTMAVTV, ASSLQVTFFYISLYTIAIGAG, FFNWWMFSSFLGALFATLGLV, WGLGYGIPTVGLLVSLVVFYI, VLGLIFIWLVTLIPSTLWAQV, IPAASLGSFVTLSMLLSVPMY, LGVGFAIQIVAIAIASAVEVK, IFWLLPQYSLLGIGDVFNAIG, TFFTSGIGLGNFLNSFLVTMI, and YYYGFLVVISIVNMGLFVWAA.

It belongs to the major facilitator superfamily. Proton-dependent oligopeptide transporter (POT/PTR) (TC 2.A.17) family. In terms of tissue distribution, expressed in flowers. Detected in stems, leaves and siliques.

Its subcellular location is the membrane. The polypeptide is Protein NRT1/ PTR FAMILY 5.1 (NPF5.1) (Arabidopsis thaliana (Mouse-ear cress)).